Consider the following 553-residue polypeptide: Putative ABC transporter ATP-binding protein BCE_3323 (553 aa).

2 consecutive ABC transporter domains span residues 7–245 (AEIN…FRPF) and 295–527 (LSAE…SINR). ATP-binding positions include 41 to 48 (GGSGSGKT) and 329 to 336 (GKNGTGKS).

It belongs to the ABC transporter superfamily.

It localises to the cell membrane. In terms of biological role, probably part of an ABC transporter complex. Responsible for energy coupling to the transport system. The chain is Putative ABC transporter ATP-binding protein BCE_3323 from Bacillus cereus (strain ATCC 10987 / NRS 248).